Consider the following 486-residue polypeptide: High-affinity iron permease fer2 (486 aa).

2 helical membrane-spanning segments follow: residues 76–96 (IVLL…AAFL) and 113–133 (LWEG…SLAI). Asn174 carries an N-linked (GlcNAc...) asparagine glycan. Positions 175–209 (HSDDSASASSSSARQAAEEEAGTKTTRTEKLNPLE) are disordered. A compositionally biased stretch (low complexity) spans 179–189 (SASASSSSARQ). Helical transmembrane passes span 252 to 272 (ALFT…VVFI), 283 to 303 (SIPL…FLIF), and 308 to 328 (LVSV…IASG). The N-linked (GlcNAc...) asparagine glycan is linked to Asn393. The helical transmembrane segment at 400–420 (SVFMYIGYWFAVAGYLWYQIW) threads the bilayer. Asn438 is a glycosylation site (N-linked (GlcNAc...) asparagine). Residues 441–486 (IQARQRKQEKAHQRQLREADQEEHGHSSNSDKQQHPSEAGPSTLSH) are disordered. Residues 446–466 (RKQEKAHQRQLREADQEEHGH) are compositionally biased toward basic and acidic residues.

The protein belongs to the oxidase-dependent Fe transporter (OFeT) (TC 9.A.10.1) family.

The protein localises to the cell membrane. In terms of biological role, permease for high affinity iron uptake. This Mycosarcoma maydis (Corn smut fungus) protein is High-affinity iron permease fer2.